Reading from the N-terminus, the 371-residue chain is 4-hydroxy-3-methylbut-2-en-1-yl diphosphate synthase (flavodoxin) (371 aa).

[4Fe-4S] cluster contacts are provided by C270, C273, C305, and E312.

It belongs to the IspG family. [4Fe-4S] cluster is required as a cofactor.

It carries out the reaction (2E)-4-hydroxy-3-methylbut-2-enyl diphosphate + oxidized [flavodoxin] + H2O + 2 H(+) = 2-C-methyl-D-erythritol 2,4-cyclic diphosphate + reduced [flavodoxin]. It functions in the pathway isoprenoid biosynthesis; isopentenyl diphosphate biosynthesis via DXP pathway; isopentenyl diphosphate from 1-deoxy-D-xylulose 5-phosphate: step 5/6. Functionally, converts 2C-methyl-D-erythritol 2,4-cyclodiphosphate (ME-2,4cPP) into 1-hydroxy-2-methyl-2-(E)-butenyl 4-diphosphate. The protein is 4-hydroxy-3-methylbut-2-en-1-yl diphosphate synthase (flavodoxin) of Psychrobacter arcticus (strain DSM 17307 / VKM B-2377 / 273-4).